Reading from the N-terminus, the 191-residue chain is Thymidine kinase (191 aa).

ATP is bound by residues 15–22 (GSMFSGKS) and 88–91 (DEVQ). The active-site Proton acceptor is the Glu-89. Zn(2+) is bound by residues Cys-145, Cys-148, Cys-183, and His-186.

The protein belongs to the thymidine kinase family. Homotetramer.

The protein resides in the cytoplasm. It carries out the reaction thymidine + ATP = dTMP + ADP + H(+). This chain is Thymidine kinase, found in Macrococcus caseolyticus (strain JCSC5402) (Macrococcoides caseolyticum).